The primary structure comprises 397 residues: Elongation factor Tu (397 aa).

The tr-type G domain maps to 10–206; the sequence is KPHVNIGTIG…AVDSYIPTPE (197 aa). Residues 19 to 26 are G1; it reads GHVDHGKT. 19–26 is a GTP binding site; it reads GHVDHGKT. A Mg(2+)-binding site is contributed by Thr26. A G2 region spans residues 60-64; it reads GITIN. Residues 81–84 form a G3 region; it reads DCPG. GTP contacts are provided by residues 81 to 85 and 136 to 139; these read DCPGH and NKAD. The tract at residues 136 to 139 is G4; the sequence is NKAD. Residues 174 to 176 are G5; the sequence is SAL.

Belongs to the TRAFAC class translation factor GTPase superfamily. Classic translation factor GTPase family. EF-Tu/EF-1A subfamily. As to quaternary structure, monomer.

The protein resides in the cytoplasm. The enzyme catalyses GTP + H2O = GDP + phosphate + H(+). Functionally, GTP hydrolase that promotes the GTP-dependent binding of aminoacyl-tRNA to the A-site of ribosomes during protein biosynthesis. The protein is Elongation factor Tu of Clostridium perfringens (strain ATCC 13124 / DSM 756 / JCM 1290 / NCIMB 6125 / NCTC 8237 / Type A).